The following is a 200-amino-acid chain: GTP cyclohydrolase-2 (200 aa).

Residue 49-53 (RVHSE) participates in GTP binding. Cys54, Cys65, and Cys67 together coordinate Zn(2+). Residues Gln70, 92–94 (EGR), and Thr114 each bind GTP. The active-site Proton acceptor is Asp126. The active-site Nucleophile is Arg128. GTP contacts are provided by Thr149 and Lys154.

It belongs to the GTP cyclohydrolase II family. As to quaternary structure, homodimer. The cofactor is Zn(2+).

The enzyme catalyses GTP + 4 H2O = 2,5-diamino-6-hydroxy-4-(5-phosphoribosylamino)-pyrimidine + formate + 2 phosphate + 3 H(+). The protein operates within cofactor biosynthesis; riboflavin biosynthesis; 5-amino-6-(D-ribitylamino)uracil from GTP: step 1/4. Catalyzes the conversion of GTP to 2,5-diamino-6-ribosylamino-4(3H)-pyrimidinone 5'-phosphate (DARP), formate and pyrophosphate. This chain is GTP cyclohydrolase-2, found in Klebsiella pneumoniae (strain 342).